A 174-amino-acid polypeptide reads, in one-letter code: Interleukin-10 (174 aa).

Residues 1-16 (MPTWMLLFCLLCVTSS) form the signal peptide. The N-linked (GlcNAc...) asparagine glycan is linked to Asn17. Intrachain disulfides connect Cys26–Cys122 and Cys76–Cys128.

The protein belongs to the IL-10 family. Homodimer. Interacts with IL10RA and IL10RB.

The protein resides in the secreted. Major immune regulatory cytokine that acts on many cells of the immune system where it has profound anti-inflammatory functions, limiting excessive tissue disruption caused by inflammation. Mechanistically, IL10 binds to its heterotetrameric receptor comprising IL10RA and IL10RB leading to JAK1 and STAT2-mediated phosphorylation of STAT3. In turn, STAT3 translocates to the nucleus where it drives expression of anti-inflammatory mediators. Targets antigen-presenting cells (APCs) such as macrophages and monocytes and inhibits their release of pro-inflammatory cytokines including granulocyte-macrophage colony-stimulating factor /GM-CSF, granulocyte colony-stimulating factor/G-CSF, IL-1 alpha, IL-1 beta, IL-6, IL-8 and TNF-alpha. Also interferes with antigen presentation by reducing the expression of MHC-class II and co-stimulatory molecules, thereby inhibiting their ability to induce T cell activation. In addition, controls the inflammatory response of macrophages by reprogramming essential metabolic pathways including mTOR signaling. In Trichosurus vulpecula (Brush-tailed possum), this protein is Interleukin-10 (IL10).